A 352-amino-acid chain; its full sequence is tRNA pseudouridine synthase D (352 aa).

The active-site Nucleophile is Asp-81. Positions 158-306 (GVPNYFGQQR…RHERRTLLLK (149 aa)) constitute a TRUD domain.

This sequence belongs to the pseudouridine synthase TruD family.

The enzyme catalyses uridine(13) in tRNA = pseudouridine(13) in tRNA. Its function is as follows. Responsible for synthesis of pseudouridine from uracil-13 in transfer RNAs. This Photobacterium profundum (strain SS9) protein is tRNA pseudouridine synthase D.